The primary structure comprises 447 residues: 2-oxoadipate dioxygenase/decarboxylase (447 aa).

Positions 68, 72, and 224 each coordinate 2-oxoadipate. H68 is a Fe(2+) binding site. Fe(2+) contacts are provided by H224 and E290. Position 391 (V391) interacts with 2-oxoadipate.

This sequence belongs to the 2-oxoadipate dioxygenase/decarboxylase family. Fe(2+) is required as a cofactor.

The catalysed reaction is 2-oxoadipate + O2 = (R)-2-hydroxyglutarate + CO2. In terms of biological role, catalyzes the decarboxylation and hydroxylation of 2-oxoadipate (2OA) to form D-2-hydroxyglutarate (D-2-HGA). The protein is 2-oxoadipate dioxygenase/decarboxylase of Shigella flexneri.